A 210-amino-acid polypeptide reads, in one-letter code: Protein GET1 (210 aa).

Over Met-1 to Leu-4 the chain is Lumenal. Residues Leu-5–Asn-24 form a helical membrane-spanning segment. The Cytoplasmic segment spans residues Thr-25–Arg-110. A coiled-coil region spans residues Asn-39–Leu-95. A helical transmembrane segment spans residues Phe-111–Phe-131. At Glu-132–Thr-155 the chain is on the lumenal side. The chain crosses the membrane as a helical span at residues Val-156 to Ala-172. Topologically, residues Gly-173–Leu-210 are cytoplasmic. Positions Lys-189–Leu-210 are disordered.

It belongs to the WRB/GET1 family. In terms of assembly, interacts with GET3.

Its subcellular location is the endoplasmic reticulum membrane. In terms of biological role, required for the post-translational delivery of tail-anchored (TA) proteins to the endoplasmic reticulum. Acts as a membrane receptor for soluble GET3, which recognizes and selectively binds the transmembrane domain of TA proteins in the cytosol. The polypeptide is Protein GET1 (Coccidioides posadasii (strain C735) (Valley fever fungus)).